The sequence spans 185 residues: Ribosome-recycling factor (185 aa).

Belongs to the RRF family.

It is found in the cytoplasm. Functionally, responsible for the release of ribosomes from messenger RNA at the termination of protein biosynthesis. May increase the efficiency of translation by recycling ribosomes from one round of translation to another. The chain is Ribosome-recycling factor from Helicobacter hepaticus (strain ATCC 51449 / 3B1).